We begin with the raw amino-acid sequence, 128 residues long: MSGRGKQGGKARAKAKTRSSRAGLQFPVGRVHRLLRKGNYAERVGAGAPVYLAAVLEYLTAEILELAGNAARDNKKTRIIPRHLQLAIRNDEELNKLLGKVTIAQGGVLPNIQAVLLPKKTESHHKTK.

A disordered region spans residues Met1–Ala22. Ser2 carries the post-translational modification N-acetylserine. Ser2 carries the phosphoserine; by RPS6KA5 modification. Arg4 carries the citrulline; alternate modification. Residue Arg4 is modified to Symmetric dimethylarginine; by PRMT5; alternate. Lys6 bears the N6-(2-hydroxyisobutyryl)lysine mark. A compositionally biased stretch (basic residues) spans Gln7–Ser19. Lys10 is modified (N6-(2-hydroxyisobutyryl)lysine; alternate). Lys10 and Lys14 each carry N6-(beta-hydroxybutyryl)lysine; alternate. Lys10 bears the N6-lactoyllysine; alternate mark. Residue Lys10 is modified to N6-succinyllysine; alternate. Residue Lys14 forms a Glycyl lysine isopeptide (Lys-Gly) (interchain with G-Cter in ubiquitin); alternate linkage. Lys16 is covalently cross-linked (Glycyl lysine isopeptide (Lys-Gly) (interchain with G-Cter in ubiquitin)). N6-(2-hydroxyisobutyryl)lysine; alternate is present on Lys37. At Lys37 the chain carries N6-(beta-hydroxybutyryl)lysine; alternate. N6-crotonyllysine; alternate is present on Lys37. N6-(2-hydroxyisobutyryl)lysine occurs at positions 75 and 76. Lys96 carries the N6-(2-hydroxyisobutyryl)lysine; alternate modification. Lys96 carries the N6-(beta-hydroxybutyryl)lysine; alternate modification. Lys96 carries the post-translational modification N6-succinyllysine; alternate. Lys96 carries the post-translational modification N6-glutaryllysine; alternate. Residue Lys100 is modified to N6-glutaryllysine. The residue at position 105 (Gln105) is an N5-methylglutamine. Lys119 carries the N6-(2-hydroxyisobutyryl)lysine; alternate modification. The residue at position 119 (Lys119) is an N6-(beta-hydroxybutyryl)lysine; alternate. N6-crotonyllysine; alternate is present on residues Lys119 and Lys120. N6-glutaryllysine; alternate is present on residues Lys119 and Lys120. Lys120 is covalently cross-linked (Glycyl lysine isopeptide (Lys-Gly) (interchain with G-Cter in ubiquitin); alternate). Thr121 is subject to Phosphothreonine; by DCAF1. An N6-crotonyllysine; alternate modification is found at Lys126. Lys126 is subject to N6-glutaryllysine; alternate.

This sequence belongs to the histone H2A family. In terms of assembly, the nucleosome is a histone octamer containing two molecules each of H2A, H2B, H3 and H4 assembled in one H3-H4 heterotetramer and two H2A-H2B heterodimers. The octamer wraps approximately 147 bp of DNA. Post-translationally, deiminated on Arg-4 in granulocytes upon calcium entry. In terms of processing, monoubiquitination of Lys-120 (H2AK119Ub) by RING1, TRIM37 and RNF2/RING2 complex gives a specific tag for epigenetic transcriptional repression and participates in X chromosome inactivation of female mammals. It is involved in the initiation of both imprinted and random X inactivation. Ubiquitinated H2A is enriched in inactive X chromosome chromatin. Ubiquitination of H2A functions downstream of methylation of 'Lys-27' of histone H3 (H3K27me). H2AK119Ub by RNF2/RING2 can also be induced by ultraviolet and may be involved in DNA repair. Monoubiquitination of Lys-120 (H2AK119Ub) by TRIM37 may promote transformation of cells in a number of breast cancers. Following DNA double-strand breaks (DSBs), it is ubiquitinated through 'Lys-63' linkage of ubiquitin moieties by the E2 ligase UBE2N and the E3 ligases RNF8 and RNF168, leading to the recruitment of repair proteins to sites of DNA damage. Ubiquitination at Lys-14 and Lys-16 (H2AK13Ub and H2AK15Ub, respectively) in response to DNA damage is initiated by RNF168 that mediates monoubiquitination at these 2 sites, and 'Lys-63'-linked ubiquitin are then conjugated to monoubiquitin; RNF8 is able to extend 'Lys-63'-linked ubiquitin chains in vitro. Deubiquitinated by USP51 at Lys-14 and Lys-16 (H2AK13Ub and H2AK15Ub, respectively) after damaged DNA is repaired. H2AK119Ub and ionizing radiation-induced 'Lys-63'-linked ubiquitination (H2AK13Ub and H2AK15Ub) are distinct events. Phosphorylation on Ser-2 (H2AS1ph) is enhanced during mitosis. Phosphorylation on Ser-2 by RPS6KA5/MSK1 directly represses transcription. Acetylation of H3 inhibits Ser-2 phosphorylation by RPS6KA5/MSK1. Phosphorylation at Thr-121 (H2AT120ph) by DCAF1 is present in the regulatory region of many tumor suppresor genes and down-regulates their transcription. Post-translationally, glutamine methylation at Gln-105 (H2AQ104me) by FBL is specifically dedicated to polymerase I. It is present at 35S ribosomal DNA locus and impairs binding of the FACT complex. In terms of processing, symmetric dimethylation on Arg-4 by the PRDM1/PRMT5 complex may play a crucial role in the germ-cell lineage. Crotonylation (Kcr) is specifically present in male germ cells and marks testis-specific genes in post-meiotic cells, including X-linked genes that escape sex chromosome inactivation in haploid cells. Crotonylation marks active promoters and enhancers and confers resistance to transcriptional repressors. It is also associated with post-meiotically activated genes on autosomes. Post-translationally, lactylated in macrophages by EP300/P300 by using lactoyl-CoA directly derived from endogenous or exogenous lactate, leading to stimulates gene transcription.

The protein resides in the nucleus. It is found in the chromosome. Functionally, core component of nucleosome. Nucleosomes wrap and compact DNA into chromatin, limiting DNA accessibility to the cellular machineries which require DNA as a template. Histones thereby play a central role in transcription regulation, DNA repair, DNA replication and chromosomal stability. DNA accessibility is regulated via a complex set of post-translational modifications of histones, also called histone code, and nucleosome remodeling. The chain is Histone H2A type 1-J from Homo sapiens (Human).